A 462-amino-acid polypeptide reads, in one-letter code: L-seryl-tRNA(Sec) selenium transferase (462 aa).

An N6-(pyridoxal phosphate)lysine modification is found at Lys-292.

This sequence belongs to the SelA family. Pyridoxal 5'-phosphate serves as cofactor.

Its subcellular location is the cytoplasm. The enzyme catalyses L-seryl-tRNA(Sec) + selenophosphate + H(+) = L-selenocysteinyl-tRNA(Sec) + phosphate. It participates in aminoacyl-tRNA biosynthesis; selenocysteinyl-tRNA(Sec) biosynthesis; selenocysteinyl-tRNA(Sec) from L-seryl-tRNA(Sec) (bacterial route): step 1/1. Its function is as follows. Converts seryl-tRNA(Sec) to selenocysteinyl-tRNA(Sec) required for selenoprotein biosynthesis. This is L-seryl-tRNA(Sec) selenium transferase from Clostridium perfringens (strain 13 / Type A).